Consider the following 485-residue polypeptide: Rhamnulokinase (485 aa).

8–12 lines the ATP pocket; that stretch reads ASSGR. Substrate-binding positions include glycine 78 and 231–233; that span reads HDT. Aspartate 232 functions as the Proton acceptor in the catalytic mechanism. Threonine 254 provides a ligand contact to ATP. Asparagine 291 is a substrate binding site. Glutamine 299 lines the ATP pocket. A disulfide bridge connects residues cysteine 348 and cysteine 365. An ATP-binding site is contributed by glycine 397. The cysteines at positions 408 and 412 are disulfide-linked.

Belongs to the rhamnulokinase family. The cofactor is Mg(2+).

It catalyses the reaction L-rhamnulose + ATP = L-rhamnulose 1-phosphate + ADP + H(+). It functions in the pathway carbohydrate degradation; L-rhamnose degradation; glycerone phosphate from L-rhamnose: step 2/3. Its function is as follows. Involved in the catabolism of L-rhamnose (6-deoxy-L-mannose). Catalyzes the transfer of the gamma-phosphate group from ATP to the 1-hydroxyl group of L-rhamnulose to yield L-rhamnulose 1-phosphate. In Yersinia pestis bv. Antiqua (strain Antiqua), this protein is Rhamnulokinase.